We begin with the raw amino-acid sequence, 406 residues long: Arginine deiminase (406 aa).

Residue Cys396 is the Amidino-cysteine intermediate of the active site.

This sequence belongs to the arginine deiminase family.

The protein resides in the cytoplasm. It carries out the reaction L-arginine + H2O = L-citrulline + NH4(+). It participates in amino-acid degradation; L-arginine degradation via ADI pathway; carbamoyl phosphate from L-arginine: step 1/2. The polypeptide is Arginine deiminase (Aliivibrio fischeri (strain MJ11) (Vibrio fischeri)).